A 962-amino-acid polypeptide reads, in one-letter code: MKKFFDSRREQGSSGLGSGSSGGGGSSSGLGSGYIGRVFGIGRQQVTVDEVLAEGGFALVFLVRTSNGVKCALKRMFVNNEHDLQVCKREIQIMRDLSGHKNIVGYIDSSINNVSSGDVWEVLILMDFCRGGQVVNLMNQRLQTGFTENEVLQIFCDTCEAVARLHQCKTPIIHRDLKVENILLHDRGHYVLCDFGSATNKFQNPQAEGVNAVEDEIKKYTTLSYRAPEMVNLYSGKIITTKADIWALGCLLYKLCYFTLPFGESQVAICDGSFTIPDNSRYSQDMHCLIYMLEPDPDKRPDIYQVSYFSFKLLKKECPVPNVQNSPIPTKLPEPVKASEAAVKKTQPKARLTDPIPTTETSIAPRQRPKAGQTQPNPGILPIQPALTPRKRATVQPLPQATGPSNQPSLLASVSQPKAQATPSQPLQSSQPKQPQAPPTPQQTPAPQTQGLPTQAQATPQHQQQLLLKQQQQQQQQQQQQQPQQPTAPPQPSGTFYQQQQPQQQQAQTQQQFQAVHPAAQQSVTAQFPVVSQGGSQQQLMQNFYQQQQQQQQQQQQLMAQQAALQQKTAVVVPQPQAQPATAPQAAAAQEPQIQAPARQQPKVQTTPPPTIQGQKVGSLTPPSSPKTQRAGHRRILSDVTHSAVFGVPASKSTQLLHAAAAEASLSKSKSATTTPSGSPRTSQQNVSNASEGSTWNPFDDDNFSKLTAEELLNKDFAKLGEGKLPEKLGGSAESLIPGFQATQGDAFATSSFSAGTAEKRKGGQAVDSGIPLLSVSDPFIPLQVPDAPEKLIEGLKSPDTSLLLPDLLPMTDPFGSTSDAVIEKADAAVESLIPGLEPPVAQRLPSHTESVTSNRTDSLTGEDSLLDCSLLSNPTADLLDEFAPIALSASTHKAAEDSNLISGFGVAEGSEKVAEDEFDPIPVLITKNTQGGHSRNSSGSSESSLPNLARSLLLVDQLIDL.

Methionine 1 bears the N-acetylmethionine mark. The segment covering 1 to 11 (MKKFFDSRREQ) has biased composition (basic and acidic residues). Residues 1–27 (MKKFFDSRREQGSSGLGSGSSGGGGSS) are disordered. Phosphoserine is present on serine 14. A compositionally biased stretch (gly residues) spans 14–27 (SGLGSGSSGGGGSS). Residues 46 to 314 (VTVDEVLAEG…QVSYFSFKLL (269 aa)) form the Protein kinase domain. ATP is bound by residues 52-60 (LAEGGFALV) and lysine 74. The active-site Proton acceptor is aspartate 176. Residue tyrosine 234 is modified to Phosphotyrosine. Position 235 is a phosphoserine (serine 235). 2 disordered regions span residues 325-515 (NSPI…QFQA) and 576-633 (PQAQ…RAGH). Threonine 353 and threonine 388 each carry phosphothreonine. Arginine 390 carries the post-translational modification Omega-N-methylarginine. Positions 397–418 (PLPQATGPSNQPSLLASVSQPK) are enriched in polar residues. Low complexity predominate over residues 419 to 434 (AQATPSQPLQSSQPKQ). The segment covering 435 to 444 (PQAPPTPQQT) has biased composition (pro residues). Threonine 440 is modified (phosphothreonine). Composition is skewed to low complexity over residues 445–485 (PAPQ…QPQQ), 498–514 (QQQQ…QQFQ), and 576–606 (PQAQ…KVQT). Threonine 607 bears the Phosphothreonine mark. Residues 614-628 (GQKVGSLTPPSSPKT) are compositionally biased toward polar residues. Serine 619 is subject to Phosphoserine. A Phosphothreonine modification is found at threonine 621. Serine 624, serine 625, serine 638, and serine 651 each carry phosphoserine. Residue threonine 654 is modified to Phosphothreonine. Over residues 664 to 677 (ASLSKSKSATTTPS) the composition is skewed to low complexity. Residues 664–702 (ASLSKSKSATTTPSGSPRTSQQNVSNASEGSTWNPFDDD) are disordered. Over residues 678–697 (GSPRTSQQNVSNASEGSTWN) the composition is skewed to polar residues. Residues serine 732, serine 847, serine 938, and serine 939 each carry the phosphoserine modification. The segment at 824–961 (EKADAAVESL…SLLLVDQLID (138 aa)) is clathrin-binding domain (CBD). 2 disordered regions span residues 839-860 (PPVA…TDSL) and 925-946 (LITK…ESSL). A compositionally biased stretch (polar residues) spans 846–860 (PSHTESVTSNRTDSL). A compositionally biased stretch (low complexity) spans 932-945 (GGHSRNSSGSSESS).

Belongs to the protein kinase superfamily. Ser/Thr protein kinase family. As to quaternary structure, interacts (via CBD domain) with clathrin. Interacts with AP-2 complex. Interacts with NUMB. Interacts with alpha-adaptin. Interacts with EPS15. Interacts with membrane-bound activated NOTCH1 but not with the inactive full-length form of NOTCH1. Preferentially interacts with monoubiquitinated activated NOTCH1 compared to the non-ubiquitinated form. Post-translationally, autophosphorylated.

It localises to the cell membrane. The protein localises to the membrane. Its subcellular location is the clathrin-coated pit. It is found in the presynapse. The enzyme catalyses L-seryl-[protein] + ATP = O-phospho-L-seryl-[protein] + ADP + H(+). It carries out the reaction L-threonyl-[protein] + ATP = O-phospho-L-threonyl-[protein] + ADP + H(+). Stimulated by clathrin. In terms of biological role, regulates clathrin-mediated endocytosis by phosphorylating the AP2M1/mu2 subunit of the adaptor protein complex 2 (AP-2) which ensures high affinity binding of AP-2 to cargo membrane proteins during the initial stages of endocytosis. Preferentially, may phosphorylate substrates on threonine residues. Regulates phosphorylation of other AP-2 subunits as well as AP-2 localization and AP-2-mediated internalization of ligand complexes. Phosphorylates NUMB and regulates its cellular localization, promoting NUMB localization to endosomes. Binds to and stabilizes the activated form of NOTCH1, increases its localization in endosomes and regulates its transcriptional activity. In Rattus norvegicus (Rat), this protein is AP2-associated protein kinase 1 (Aak1).